Reading from the N-terminus, the 263-residue chain is Probable elongation factor 1-beta/1-delta 2 (263 aa).

Serine 2 is subject to N-acetylserine. The disordered stretch occupies residues 112–153 (QGQTSSVAAPAAAPAAAKEEAAGDDDFDLFGSEDEEEDEEKK). Positions 133–150 (AGDDDFDLFGSEDEEEDE) are enriched in acidic residues.

It belongs to the EF-1-beta/EF-1-delta family. As to quaternary structure, EF-1 is composed of 4 subunits: alpha, beta, delta, and gamma.

Its function is as follows. EF-1-beta and EF-1-delta stimulate the exchange of GDP bound to EF-1-alpha to GTP. This chain is Probable elongation factor 1-beta/1-delta 2, found in Caenorhabditis elegans.